A 128-amino-acid chain; its full sequence is L-ectoine synthase (128 aa).

The protein belongs to the ectoine synthase family.

It catalyses the reaction (2S)-4-acetamido-2-aminobutanoate = L-ectoine + H2O. It participates in amine and polyamine biosynthesis; ectoine biosynthesis; L-ectoine from L-aspartate 4-semialdehyde: step 3/3. Its function is as follows. Catalyzes the circularization of gamma-N-acetyl-alpha,gamma-diaminobutyric acid (ADABA) to ectoine (1,4,5,6-tetrahydro-2-methyl-4-pyrimidine carboxylic acid), which is an excellent osmoprotectant. The chain is L-ectoine synthase from Aliivibrio fischeri (strain MJ11) (Vibrio fischeri).